Consider the following 27-residue polypeptide: Bombinin-like peptide 2 (27 aa).

At Asn27 the chain carries Asparagine amide.

This sequence belongs to the bombinin family. As to expression, expressed by the skin glands.

It is found in the secreted. Has antimicrobial activity, but no hemolytic activity. Preference on killing Gram-negative non-enteric bacteria. This Bombina orientalis (Oriental fire-bellied toad) protein is Bombinin-like peptide 2.